The sequence spans 147 residues: uncharacterized protein (147 aa).

Low complexity predominate over residues 72-81 (ARAKPASRAP). The segment at 72 to 147 (ARAKPASRAP…QGAAGRRLSP (76 aa)) is disordered.

This is an uncharacterized protein from Homo sapiens (Human).